Reading from the N-terminus, the 70-residue chain is ATP synthase subunit c (70 aa).

2 helical membrane passes run 5–25 and 47–67; these read AAGIAAGLAAVGGAIAVAIIV and FIGVPLAEAVPIIAIVVSFIL.

The protein belongs to the ATPase C chain family. F-type ATPases have 2 components, F(1) - the catalytic core - and F(0) - the membrane proton channel. F(1) has five subunits: alpha(3), beta(3), gamma(1), delta(1), epsilon(1). F(0) has three main subunits: a(1), b(2) and c(10-14). The alpha and beta chains form an alternating ring which encloses part of the gamma chain. F(1) is attached to F(0) by a central stalk formed by the gamma and epsilon chains, while a peripheral stalk is formed by the delta and b chains.

Its subcellular location is the cell membrane. Its function is as follows. F(1)F(0) ATP synthase produces ATP from ADP in the presence of a proton or sodium gradient. F-type ATPases consist of two structural domains, F(1) containing the extramembraneous catalytic core and F(0) containing the membrane proton channel, linked together by a central stalk and a peripheral stalk. During catalysis, ATP synthesis in the catalytic domain of F(1) is coupled via a rotary mechanism of the central stalk subunits to proton translocation. Functionally, key component of the F(0) channel; it plays a direct role in translocation across the membrane. A homomeric c-ring of between 10-14 subunits forms the central stalk rotor element with the F(1) delta and epsilon subunits. The polypeptide is ATP synthase subunit c (Halalkalibacterium halodurans (strain ATCC BAA-125 / DSM 18197 / FERM 7344 / JCM 9153 / C-125) (Bacillus halodurans)).